Here is a 433-residue protein sequence, read N- to C-terminus: GTPase Der (433 aa).

2 consecutive EngA-type G domains span residues 3–167 (NRVV…KEEK) and 175–347 (IKVA…KDYT). Residues 9–16 (GRPNVGKS), 56–60 (DTGGL), 119–122 (NKID), 181–188 (GRPNVGKS), 228–232 (DTAGV), and 293–296 (NKMD) each bind GTP. The 85-residue stretch at 348-432 (KQHKTSFVNR…PIKLVIKGRE (85 aa)) folds into the KH-like domain.

This sequence belongs to the TRAFAC class TrmE-Era-EngA-EngB-Septin-like GTPase superfamily. EngA (Der) GTPase family. In terms of assembly, associates with the 50S ribosomal subunit.

In terms of biological role, GTPase that plays an essential role in the late steps of ribosome biogenesis. In Aquifex aeolicus (strain VF5), this protein is GTPase Der.